Here is a 262-residue protein sequence, read N- to C-terminus: Acyl-[acyl-carrier-protein]--UDP-N-acetylglucosamine O-acyltransferase (262 aa).

It belongs to the transferase hexapeptide repeat family. LpxA subfamily. As to quaternary structure, homotrimer.

It is found in the cytoplasm. It catalyses the reaction a (3R)-hydroxyacyl-[ACP] + UDP-N-acetyl-alpha-D-glucosamine = a UDP-3-O-[(3R)-3-hydroxyacyl]-N-acetyl-alpha-D-glucosamine + holo-[ACP]. Its pathway is glycolipid biosynthesis; lipid IV(A) biosynthesis; lipid IV(A) from (3R)-3-hydroxytetradecanoyl-[acyl-carrier-protein] and UDP-N-acetyl-alpha-D-glucosamine: step 1/6. Involved in the biosynthesis of lipid A, a phosphorylated glycolipid that anchors the lipopolysaccharide to the outer membrane of the cell. This is Acyl-[acyl-carrier-protein]--UDP-N-acetylglucosamine O-acyltransferase from Vibrio parahaemolyticus serotype O3:K6 (strain RIMD 2210633).